A 341-amino-acid polypeptide reads, in one-letter code: Heat-inducible transcription repressor HrcA (341 aa).

The protein belongs to the HrcA family.

Functionally, negative regulator of class I heat shock genes (grpE-dnaK-dnaJ and groELS operons). Prevents heat-shock induction of these operons. This Leptothrix cholodnii (strain ATCC 51168 / LMG 8142 / SP-6) (Leptothrix discophora (strain SP-6)) protein is Heat-inducible transcription repressor HrcA.